The primary structure comprises 143 residues: Large ribosomal subunit protein uL13 (143 aa).

This sequence belongs to the universal ribosomal protein uL13 family. As to quaternary structure, part of the 50S ribosomal subunit.

This protein is one of the early assembly proteins of the 50S ribosomal subunit, although it is not seen to bind rRNA by itself. It is important during the early stages of 50S assembly. The polypeptide is Large ribosomal subunit protein uL13 (Neisseria meningitidis serogroup C (strain 053442)).